A 274-amino-acid chain; its full sequence is Oxidoreductase BOA17 (274 aa).

NADP(+) contacts are provided by Leu14, Thr32, Asp57, Asn84, and Lys117. Active-site proton donor residues include Ser135 and Tyr149. NADP(+)-binding residues include Tyr149, Lys153, Ile182, and Thr184. Lys153 functions as the Lowers pKa of active site Tyr in the catalytic mechanism.

This sequence belongs to the short-chain dehydrogenases/reductases (SDR) family.

The protein operates within polyketide biosynthesis. In terms of biological role, oxidoreductase; part of the gene cluster B that mediates the biosynthesis of botcinic acid and its botcinin derivatives, acetate-derived polyketides that contribute to virulence when combined with the sesquiterpene botrydial. Botcinic acid and its derivatives have been shown to induce chlorosis and necrosis during host plant infection, but also have antifungal activities. Two polyketide synthases, BOA6 and BOA9, are involved in the biosynthesis of botcinins. BOA6 mediates the formation of the per-methylated tetraketide core by condensation of four units of malonyl-CoA with one unit of acetyl-CoA, which would be methylated in activated methylene groups to yield a bicyclic acid intermediate that could then either be converted to botrylactone derivatives or lose the starter acetate unit through a retro-Claisen type C-C bond cleavage to yield botcinin derivatives. The second polyketide synthase, BOA9, is probably required for the biosynthesis of the tetraketide side chain of botcinins. The methyltransferase (MT) domain within BOA6 is probably responsible for the incorporation of four methyl groups. The trans-enoyl reductase BOA5 might take over the enoyl reductase function of BOA6 that misses an ER domain. The monooxygenases BOA2, BOA3 and BOA4 might be involved in further hydroxylations at C4, C5 and C8, whereas BOA7, close to BOA9, could potentially be involved in the hydroxylation at C4 in the side chain of botcinins. The protein is Oxidoreductase BOA17 of Botryotinia fuckeliana (strain B05.10) (Noble rot fungus).